A 108-amino-acid chain; its full sequence is uncharacterized protein (108 aa).

The N-linked (GlcNAc...) asparagine glycan is linked to Asn-33.

In terms of processing, N-glycosylated.

This is an uncharacterized protein from Saccharomyces cerevisiae (strain ATCC 204508 / S288c) (Baker's yeast).